Here is a 489-residue protein sequence, read N- to C-terminus: tRNA(Ile)-lysidine synthase (489 aa).

35-40 is an ATP binding site; it reads SGGLDS.

Belongs to the tRNA(Ile)-lysidine synthase family.

Its subcellular location is the cytoplasm. It carries out the reaction cytidine(34) in tRNA(Ile2) + L-lysine + ATP = lysidine(34) in tRNA(Ile2) + AMP + diphosphate + H(+). Ligates lysine onto the cytidine present at position 34 of the AUA codon-specific tRNA(Ile) that contains the anticodon CAU, in an ATP-dependent manner. Cytidine is converted to lysidine, thus changing the amino acid specificity of the tRNA from methionine to isoleucine. This is tRNA(Ile)-lysidine synthase from Burkholderia pseudomallei (strain K96243).